Consider the following 544-residue polypeptide: GMP synthase [glutamine-hydrolyzing] (544 aa).

In terms of domain architecture, Glutamine amidotransferase type-1 spans 12 to 210; it reads TILILDFGSQ…VKNVCSVRDG (199 aa). Cys88 (nucleophile) is an active-site residue. Catalysis depends on residues His184 and Glu186. The GMPS ATP-PPase domain occupies 211–419; it reads WSMESFIPKE…LNIPEHLVGR (209 aa). Residue 239-245 participates in ATP binding; it reads SGGVDST. Arg312, Asp481, Lys536, and Glu542 together coordinate XMP.

In terms of assembly, homodimer. Also forms a small population of homotetramers. Mg(2+) is required as a cofactor.

It localises to the cytoplasm. The protein resides in the cytosol. It catalyses the reaction XMP + L-glutamine + ATP + H2O = GMP + L-glutamate + AMP + diphosphate + 2 H(+). It participates in purine metabolism; GMP biosynthesis; GMP from XMP (L-Gln route): step 1/1. Functionally, catalyzes the conversion of xanthine monophosphate (XMP) to GMP in the presence of glutamine and ATP through an adenyl-XMP intermediate. The chain is GMP synthase [glutamine-hydrolyzing] from Cryptococcus neoformans var. neoformans serotype D (strain JEC21 / ATCC MYA-565) (Filobasidiella neoformans).